We begin with the raw amino-acid sequence, 550 residues long: Glucose-6-phosphate isomerase (550 aa).

The active-site Proton donor is the Glu355. Catalysis depends on residues His386 and Lys512.

This sequence belongs to the GPI family.

Its subcellular location is the cytoplasm. The catalysed reaction is alpha-D-glucose 6-phosphate = beta-D-fructose 6-phosphate. The protein operates within carbohydrate biosynthesis; gluconeogenesis. Its pathway is carbohydrate degradation; glycolysis; D-glyceraldehyde 3-phosphate and glycerone phosphate from D-glucose: step 2/4. In terms of biological role, catalyzes the reversible isomerization of glucose-6-phosphate to fructose-6-phosphate. The polypeptide is Glucose-6-phosphate isomerase (Rhodococcus opacus (strain B4)).